A 63-amino-acid polypeptide reads, in one-letter code: UPF0434 protein Sde_1297 (63 aa).

This sequence belongs to the UPF0434 family.

This is UPF0434 protein Sde_1297 from Saccharophagus degradans (strain 2-40 / ATCC 43961 / DSM 17024).